The sequence spans 856 residues: Leucine--tRNA ligase (856 aa).

The 'HIGH' region motif lies at 53–63; it reads PYPSGNLHMGH. The short motif at 622–626 is the 'KMSKS' region element; that stretch reads KMSKS. Lys625 lines the ATP pocket.

The protein belongs to the class-I aminoacyl-tRNA synthetase family.

It is found in the cytoplasm. The enzyme catalyses tRNA(Leu) + L-leucine + ATP = L-leucyl-tRNA(Leu) + AMP + diphosphate. The polypeptide is Leucine--tRNA ligase (Prochlorococcus marinus (strain MIT 9215)).